The sequence spans 88 residues: UPF0297 protein str1959 (88 aa).

This sequence belongs to the UPF0297 family.

The protein is UPF0297 protein str1959 of Streptococcus thermophilus (strain CNRZ 1066).